Here is a 694-residue protein sequence, read N- to C-terminus: Cyclic nucleotide-gated ion channel 4 (694 aa).

The span at Met1–Arg15 shows a compositional bias: basic and acidic residues. The interval Met1–Arg64 is disordered. The Cytoplasmic portion of the chain corresponds to Met1 to Lys92. Positions Ser24–Asp53 are enriched in acidic residues. Residues Val93 to Ser113 traverse the membrane as a helical segment. Topologically, residues Val114 to Trp126 are extracellular. The helical transmembrane segment at Leu127–Trp147 threads the bilayer. Over Ile148 to Asn187 the chain is Cytoplasmic. Residues Gly188–Ile208 traverse the membrane as a helical segment. The Extracellular segment spans residues Pro209 to Ser216. The chain crosses the membrane as a helical span at residues Val217 to Tyr237. Topologically, residues His238 to Gly251 are cytoplasmic. Residues Tyr252 to Ala272 form a helical membrane-spanning segment. The Extracellular segment spans residues His273–Val392. Residues Val393 to Ile413 form a helical membrane-spanning segment. Residues Lys414–Tyr694 lie on the Cytoplasmic side of the membrane. A nucleoside 3',5'-cyclic phosphate-binding positions include Leu496 to Tyr626 and Asp565. Residues Phe610 to Tyr626 are calmodulin-binding. The 30-residue stretch at Arg631–Arg660 folds into the IQ domain.

The protein belongs to the cyclic nucleotide-gated cation channel (TC 1.A.1.5) family. In terms of assembly, homotetramer or heterotetramer.

Its subcellular location is the cell membrane. Functionally, acts as a cyclic nucleotide-gated ion channel. Permeable to potassium and sodium in a cyclic nucleotide-dependent fashion (cAMP or cGMP). Might constitute a common downstream component of the signaling pathways leading to hypersensitive response (HR). The chain is Cyclic nucleotide-gated ion channel 4 (CNGC4) from Arabidopsis thaliana (Mouse-ear cress).